A 600-amino-acid polypeptide reads, in one-letter code: NADH-quinone oxidoreductase subunit C/D (600 aa).

The interval 1-190 (MIDLMPKKNT…EPFFLNEQKE (190 aa)) is NADH dehydrogenase I subunit C. The tract at residues 214–600 (EFMFLNLGPN…IDFVMSDVDR (387 aa)) is NADH dehydrogenase I subunit D.

In the N-terminal section; belongs to the complex I 30 kDa subunit family. This sequence in the C-terminal section; belongs to the complex I 49 kDa subunit family. NDH-1 is composed of 13 different subunits. Subunits NuoB, CD, E, F, and G constitute the peripheral sector of the complex.

It is found in the cell membrane. The catalysed reaction is a quinone + NADH + 5 H(+)(in) = a quinol + NAD(+) + 4 H(+)(out). Functionally, NDH-1 shuttles electrons from NADH, via FMN and iron-sulfur (Fe-S) centers, to quinones in the respiratory chain. The immediate electron acceptor for the enzyme in this species is believed to be ubiquinone. Couples the redox reaction to proton translocation (for every two electrons transferred, four hydrogen ions are translocated across the cytoplasmic membrane), and thus conserves the redox energy in a proton gradient. This is NADH-quinone oxidoreductase subunit C/D from Buchnera aphidicola subsp. Acyrthosiphon pisum (strain Tuc7).